The sequence spans 480 residues: Glutamate--tRNA ligase (480 aa).

Positions 21–31 (PSPTGYLHVGG) match the 'HIGH' region motif. Residues 122 to 146 (NTQEQNKQKPRYDRHCLGDHKHSPE) show a composition bias toward basic and acidic residues. The disordered stretch occupies residues 122-149 (NTQEQNKQKPRYDRHCLGDHKHSPEQPH). The 'KMSKS' region signature appears at 248 to 252 (KLSKR). Residue Lys-251 coordinates ATP.

This sequence belongs to the class-I aminoacyl-tRNA synthetase family. Glutamate--tRNA ligase type 1 subfamily. As to quaternary structure, monomer.

Its subcellular location is the cytoplasm. It carries out the reaction tRNA(Glu) + L-glutamate + ATP = L-glutamyl-tRNA(Glu) + AMP + diphosphate. In terms of biological role, catalyzes the attachment of glutamate to tRNA(Glu) in a two-step reaction: glutamate is first activated by ATP to form Glu-AMP and then transferred to the acceptor end of tRNA(Glu). In Pasteurella multocida (strain Pm70), this protein is Glutamate--tRNA ligase.